Here is a 451-residue protein sequence, read N- to C-terminus: Enolase (451 aa).

Residue Gln163 coordinates (2R)-2-phosphoglycerate. The active-site Proton donor is Glu205. The Mg(2+) site is built by Asp258, Glu308, and Asp335. Positions 360, 389, 390, and 411 each coordinate (2R)-2-phosphoglycerate. Lys360 functions as the Proton acceptor in the catalytic mechanism.

Belongs to the enolase family. Mg(2+) serves as cofactor.

It is found in the cytoplasm. The protein resides in the secreted. The protein localises to the cell surface. It catalyses the reaction (2R)-2-phosphoglycerate = phosphoenolpyruvate + H2O. It participates in carbohydrate degradation; glycolysis; pyruvate from D-glyceraldehyde 3-phosphate: step 4/5. Its function is as follows. Catalyzes the reversible conversion of 2-phosphoglycerate (2-PG) into phosphoenolpyruvate (PEP). It is essential for the degradation of carbohydrates via glycolysis. The polypeptide is Enolase (Mycoplasma capricolum subsp. capricolum (strain California kid / ATCC 27343 / NCTC 10154)).